The following is a 243-amino-acid chain: Isoprenyl transferase 2 (243 aa).

Residue Asp-23 is part of the active site. Residue Asp-23 participates in Mg(2+) binding. Substrate contacts are provided by residues Gly-24–Arg-27, Trp-28, Arg-36, His-40, and Ser-68–Glu-70. The active-site Proton acceptor is Asn-71. Substrate-binding positions include Trp-72, Arg-74, Arg-191, and Arg-197–Ser-199. Glu-210 is a binding site for Mg(2+).

It belongs to the UPP synthase family. Homodimer. Requires Mg(2+) as cofactor.

Its function is as follows. Catalyzes the condensation of isopentenyl diphosphate (IPP) with allylic pyrophosphates generating different type of terpenoids. This Corynebacterium glutamicum (strain ATCC 13032 / DSM 20300 / JCM 1318 / BCRC 11384 / CCUG 27702 / LMG 3730 / NBRC 12168 / NCIMB 10025 / NRRL B-2784 / 534) protein is Isoprenyl transferase 2.